Reading from the N-terminus, the 529-residue chain is UDP-glucuronosyltransferase 2B1 (529 aa).

An N-terminal signal peptide occupies residues 1 to 23 (MSMKQTSVFLLIQLICYFRPGAC). N-linked (GlcNAc...) asparagine glycosylation is found at Asn134 and Asn316. The helical transmembrane segment at 494–510 (VIGFLLLCVVGVVFIIT) threads the bilayer.

Belongs to the UDP-glycosyltransferase family.

Its subcellular location is the endoplasmic reticulum membrane. The catalysed reaction is glucuronate acceptor + UDP-alpha-D-glucuronate = acceptor beta-D-glucuronoside + UDP + H(+). It carries out the reaction 17beta-estradiol + UDP-alpha-D-glucuronate = 17beta-estradiol 17-O-(beta-D-glucuronate) + UDP + H(+). In terms of biological role, UDP-glucuronosyltransferase (UGT) that catalyzes phase II biotransformation reactions in which lipophilic substrates are conjugated with glucuronic acid to increase the metabolite's water solubility, thereby facilitating excretion into either the urine or bile. Essential for the elimination and detoxification of drugs, xenobiotics and endogenous compounds. Catalyzes the glucuronidation of the endogenous estrogen hormone estradiol. In Rattus norvegicus (Rat), this protein is UDP-glucuronosyltransferase 2B1.